The chain runs to 154 residues: Aspartate carbamoyltransferase regulatory chain (154 aa).

Zn(2+) is bound by residues C109, C114, C138, and C141.

The protein belongs to the PyrI family. As to quaternary structure, contains catalytic and regulatory chains. Requires Zn(2+) as cofactor.

Involved in allosteric regulation of aspartate carbamoyltransferase. The polypeptide is Aspartate carbamoyltransferase regulatory chain (Yersinia pestis).